The following is a 349-amino-acid chain: MAVGIVGWGAYIPRYRIKTREIAEAWGDDALRIRDMYLVEEKAVGYIDEDPVTMAVEASRDALIRAGVKPSEVGAVFAGTESKPYAVKPISSILIDALGLNRQVYSVDMEFACKAGSDAIINLMGLVKANSIKYGIAVGTDSSQGEPGEHLEYTVGTGAVAYVIGSSNLAAEIKYTYPYASDTPDFWRRDSSPYPVHGEGFTGEPAYFKHIIGAAKGLMDELGMKPNDFDYAVFHQPNARFPVRVAQMLGFPLEKVKPGIVVDLIGNTYNASALLGLAKVLEEAKPGAKIIVVTFGSGAGSNAFYIETTDQLPGKVKLARTIGEMLEDKVYIDYSLYLKYRKIIKMIHG.

Asp-29 and Ala-30 together coordinate (3S)-3-hydroxy-3-methylglutaryl-CoA. The active-site Proton donor/acceptor is the Glu-81. Cys-113, Thr-154, Thr-202, and His-235 together coordinate (3S)-3-hydroxy-3-methylglutaryl-CoA. Cys-113 functions as the Acyl-thioester intermediate in the catalytic mechanism. His-235 acts as the Proton donor/acceptor in catalysis. Arg-240 lines the CoA pocket. Residues Arg-244, Asn-267, and Ser-297 each contribute to the (3S)-3-hydroxy-3-methylglutaryl-CoA site.

This sequence belongs to the thiolase-like superfamily. Archaeal HMG-CoA synthase family. In terms of assembly, interacts with acetoacetyl-CoA thiolase that catalyzes the precedent step in the pathway and with a DUF35 protein. The acetoacetyl-CoA thiolase/HMG-CoA synthase complex channels the intermediate via a fused CoA-binding site, which allows for efficient coupling of the endergonic thiolase reaction with the exergonic HMGCS reaction.

The catalysed reaction is acetoacetyl-CoA + acetyl-CoA + H2O = (3S)-3-hydroxy-3-methylglutaryl-CoA + CoA + H(+). It participates in metabolic intermediate biosynthesis; (R)-mevalonate biosynthesis; (R)-mevalonate from acetyl-CoA: step 2/3. Catalyzes the condensation of acetyl-CoA with acetoacetyl-CoA to form 3-hydroxy-3-methylglutaryl-CoA (HMG-CoA). Functions in the mevalonate (MVA) pathway leading to isopentenyl diphosphate (IPP), a key precursor for the biosynthesis of isoprenoid compounds that are building blocks of archaeal membrane lipids. The sequence is that of Hydroxymethylglutaryl-CoA synthase from Caldivirga maquilingensis (strain ATCC 700844 / DSM 13496 / JCM 10307 / IC-167).